Consider the following 692-residue polypeptide: Acyl-coenzyme A oxidase 2, peroxisomal (692 aa).

A peroxisome-targeting transit peptide spans 1–49; sequence MESRREKNPMTEEESDGLIAARRIQRLSLHLSPSLTPSPSLPLVQTETC. The FAD site is built by T186, S192, G225, R365, Q384, G452, and T473. E475 serves as the catalytic Proton acceptor. An FAD-binding site is contributed by D477.

Belongs to the acyl-CoA oxidase family. In terms of assembly, homodimer. Requires FAD as cofactor. Expressed mainly in flowers and young seedlings. Lower expression in roots, leaves and bracts.

It is found in the peroxisome. The enzyme catalyses a 2,3-saturated acyl-CoA + O2 = a (2E)-enoyl-CoA + H2O2. Functionally, catalyzes the desaturation of long-chain acyl-CoAs to 2-trans-enoyl-CoAs. Active on substrates longer than C14 and mostly with C18-CoA. Activity on long-chain mono-unsaturated substrates is double than with the corresponding saturated substrates. This chain is Acyl-coenzyme A oxidase 2, peroxisomal, found in Arabidopsis thaliana (Mouse-ear cress).